We begin with the raw amino-acid sequence, 675 residues long: Sodium/myo-inositol cotransporter 2 (675 aa).

At 1-27 (MESGTSSPQPPQLDPLDAFPQKGLEPG) the chain is on the extracellular side. Residues 28 to 48 (DIAVLVLYFLFVLAVGLWSTV) form a helical membrane-spanning segment. Over 49 to 65 (KTKRDTVKGYFLAGGDM) the chain is Cytoplasmic. A helical membrane pass occupies residues 66 to 88 (VWWPVGASLFASNVGSGHFIGLA). At 89 to 102 (GSGAATGISVSAYE) the chain is on the extracellular side. A helical transmembrane segment spans residues 103–123 (LNGLFSVLMLAWIFLPIYIAG). Over 124 to 135 (QVTTMPEYLRKR) the chain is Cytoplasmic. The chain crosses the membrane as a helical span at residues 136–156 (FGGIRIPIILAVLYLFIYIFT). Residues 157–180 (KISVDMYAGAIFIQQSLHLDLYLA) are Extracellular-facing. A helical transmembrane segment spans residues 181 to 201 (IVGLLAITAVYTVAGGLAAVI). The Cytoplasmic segment spans residues 202–208 (YTDALQT). Residues 209-229 (LIMLIGALTLMGYSFAAVGGM) form a helical membrane-spanning segment. The Extracellular segment spans residues 230–272 (EGLKEKYFLALASNRSENSSCGLPREDAFHIFRDPLTSDLPWP). A helical transmembrane segment spans residues 273-293 (GVLFGMSIPSLWYWCTDQVIV). Over 294-308 (QRTLAAKNLSHAKGG) the chain is Cytoplasmic. The helical transmembrane segment at 309–329 (ALMAAYLKVLPLFIMVFPGMV) threads the bilayer. Topologically, residues 330 to 375 (SRILFPDQVACADPEICQKICSNPSGCSDIAYPKLVLELLPTGLRG) are extracellular. Residues 376-396 (LMMAVMVAALMSSLTSIFNSA) form a helical membrane-spanning segment. Residues 397–418 (STIFTMDLWNHLRPRASEKELM) lie on the Cytoplasmic side of the membrane. The helical transmembrane segment at 419–439 (IVGRVFVLLLVLVSILWIPVV) threads the bilayer. Topologically, residues 440–446 (QASQGGQ) are extracellular. A helical transmembrane segment spans residues 447–467 (LFIYIQSISSYLQPPVAVVFI). Residues 468–479 (MGCFWKRTNEKG) lie on the Cytoplasmic side of the membrane. A helical membrane pass occupies residues 480 to 500 (AFWGLISGLLLGLVRLVLDFI). At 501-521 (YVQPRCDQPDERPVLVKSIHY) the chain is on the extracellular side. A helical membrane pass occupies residues 522 to 542 (LYFSMILSTVTLITVSTVSWF). The Cytoplasmic segment spans residues 543-654 (TEPPSKEMVS…SLEENPLVKT (112 aa)). Residues 655 to 675 (LLDVNLIFCVSCAIFIWGYFA) form a helical membrane-spanning segment.

Belongs to the sodium:solute symporter (SSF) (TC 2.A.21) family. In terms of tissue distribution, highest expression in heart, skeletal muscle, kidney, liver and placenta. Weaker expression in brain, colon, spleen, lung and peripheral blood leukocytes.

The protein resides in the membrane. The protein localises to the apical cell membrane. It carries out the reaction myo-inositol(out) + 2 Na(+)(out) = myo-inositol(in) + 2 Na(+)(in). The enzyme catalyses 1D-chiro-inositol(out) + 2 Na(+)(out) = 1D-chiro-inositol(in) + 2 Na(+)(in). The catalysed reaction is D-glucose(out) + 2 Na(+)(out) = D-glucose(in) + 2 Na(+)(in). It catalyses the reaction D-xylose(out) + 2 Na(+)(out) = D-xylose(in) + 2 Na(+)(in). MI transport activity inhibited by D-chiro-inositol (DCI), phlorizin (Pz) and sodium (Na(+)). Insulin increases D-chiro-inositol uptake. Involved in the sodium-dependent cotransport of myo-inositol (MI) with a Na(+):MI stoichiometry of 2:1. Exclusively responsible for apical MI transport and absorption in intestine. Can also transport D-chiro-inositol (DCI) but not L-fucose. Exhibits stereospecific cotransport of both D-glucose and D-xylose. May induce apoptosis through the TNF-alpha, PDCD1 pathway. May play a role in the regulation of MI concentration in serum, involving reabsorption in at least the proximal tubule of the kidney. The polypeptide is Sodium/myo-inositol cotransporter 2 (Homo sapiens (Human)).